We begin with the raw amino-acid sequence, 382 residues long: Ribosomal RNA large subunit methyltransferase F (382 aa).

2 disordered regions span residues 1 to 53 (MTKP…LHRD) and 269 to 288 (NRAS…KSQL). The span at 8–24 (ASRKPVTKSGRNSKRSR) shows a compositional bias: basic residues. Residues 269 to 286 (NRASKGHKLEPKAPKDKS) are compositionally biased toward basic and acidic residues.

This sequence belongs to the methyltransferase superfamily. METTL16/RlmF family.

It is found in the cytoplasm. The catalysed reaction is adenosine(1618) in 23S rRNA + S-adenosyl-L-methionine = N(6)-methyladenosine(1618) in 23S rRNA + S-adenosyl-L-homocysteine + H(+). Its function is as follows. Specifically methylates the adenine in position 1618 of 23S rRNA. This chain is Ribosomal RNA large subunit methyltransferase F, found in Shewanella woodyi (strain ATCC 51908 / MS32).